Consider the following 93-residue polypeptide: Pyrimidine/purine nucleoside phosphorylase (93 aa).

The protein belongs to the nucleoside phosphorylase PpnP family.

The catalysed reaction is a purine D-ribonucleoside + phosphate = a purine nucleobase + alpha-D-ribose 1-phosphate. The enzyme catalyses adenosine + phosphate = alpha-D-ribose 1-phosphate + adenine. It catalyses the reaction cytidine + phosphate = cytosine + alpha-D-ribose 1-phosphate. It carries out the reaction guanosine + phosphate = alpha-D-ribose 1-phosphate + guanine. The catalysed reaction is inosine + phosphate = alpha-D-ribose 1-phosphate + hypoxanthine. The enzyme catalyses thymidine + phosphate = 2-deoxy-alpha-D-ribose 1-phosphate + thymine. It catalyses the reaction uridine + phosphate = alpha-D-ribose 1-phosphate + uracil. It carries out the reaction xanthosine + phosphate = alpha-D-ribose 1-phosphate + xanthine. Catalyzes the phosphorolysis of diverse nucleosides, yielding D-ribose 1-phosphate and the respective free bases. Can use uridine, adenosine, guanosine, cytidine, thymidine, inosine and xanthosine as substrates. Also catalyzes the reverse reactions. This chain is Pyrimidine/purine nucleoside phosphorylase, found in Pseudomonas savastanoi pv. phaseolicola (strain 1448A / Race 6) (Pseudomonas syringae pv. phaseolicola (strain 1448A / Race 6)).